The chain runs to 82 residues: Transcription elongation factor 1 homolog (82 aa).

Zn(2+) is bound by residues Cys-26, Cys-29, Cys-50, and Cys-53.

The protein belongs to the ELOF1 family.

It is found in the nucleus. Its function is as follows. Transcription elongation factor implicated in the maintenance of proper chromatin structure in actively transcribed regions. In Manduca sexta (Tobacco hawkmoth), this protein is Transcription elongation factor 1 homolog.